The chain runs to 470 residues: Alpha-galactosidase (470 aa).

An N-terminal signal peptide occupies residues 1–18 (MFSLLLLTSTALVETALG). An intrachain disulfide couples C42 to C74. N-linked (GlcNAc...) asparagine glycosylation is present at N43. Positions 72 and 73 each coordinate substrate. A glycan (N-linked (GlcNAc...) asparagine) is linked at N82. Cysteines 121 and 151 form a disulfide. A substrate-binding site is contributed by K147. D149 acts as the Nucleophile in catalysis. N-linked (GlcNAc...) asparagine glycosylation is present at N175. R205 contacts substrate. D209 functions as the Proton donor in the catalytic mechanism. Cystine bridges form between C221-C237 and C223-C230. A substrate-binding site is contributed by Q251. N-linked (GlcNAc...) asparagine glycans are attached at residues N270, N388, N413, N422, N435, and N454.

The protein belongs to the glycosyl hydrolase 27 family. In terms of assembly, homotetramer.

It is found in the secreted. The catalysed reaction is Hydrolysis of terminal, non-reducing alpha-D-galactose residues in alpha-D-galactosides, including galactose oligosaccharides, galactomannans and galactolipids.. This chain is Alpha-galactosidase (MEL), found in Zygotorulaspora mrakii (Zygosaccharomyces mrakii).